A 173-amino-acid chain; its full sequence is Lipoprotein signal peptidase (173 aa).

A run of 4 helical transmembrane segments spans residues Phe7 to Val27, Leu41 to Phe61, Trp70 to Asn90, and Ala95 to Gly115. Catalysis depends on residues Asp119 and Asp135. The helical transmembrane segment at Ile130–Trp150 threads the bilayer.

It belongs to the peptidase A8 family.

It localises to the cell inner membrane. The enzyme catalyses Release of signal peptides from bacterial membrane prolipoproteins. Hydrolyzes -Xaa-Yaa-Zaa-|-(S,diacylglyceryl)Cys-, in which Xaa is hydrophobic (preferably Leu), and Yaa (Ala or Ser) and Zaa (Gly or Ala) have small, neutral side chains.. Its pathway is protein modification; lipoprotein biosynthesis (signal peptide cleavage). In terms of biological role, this protein specifically catalyzes the removal of signal peptides from prolipoproteins. This is Lipoprotein signal peptidase from Cyanothece sp. (strain PCC 7425 / ATCC 29141).